The following is a 512-amino-acid chain: Lysine--tRNA ligase (512 aa).

Mg(2+) contacts are provided by E408 and E415.

This sequence belongs to the class-II aminoacyl-tRNA synthetase family. Homodimer. The cofactor is Mg(2+).

The protein resides in the cytoplasm. It catalyses the reaction tRNA(Lys) + L-lysine + ATP = L-lysyl-tRNA(Lys) + AMP + diphosphate. The sequence is that of Lysine--tRNA ligase from Prochlorococcus marinus (strain MIT 9312).